A 364-amino-acid polypeptide reads, in one-letter code: 1-aminocyclopropane-1-carboxylate oxidase homolog 11 (364 aa).

The region spanning 213 to 312 is the Fe2OG dioxygenase domain; that stretch reads KSLLMICHYY…RISVASFFSS (100 aa). Fe cation is bound by residues H237, D239, and H293. Residue R303 participates in 2-oxoglutarate binding.

It belongs to the iron/ascorbate-dependent oxidoreductase family. Fe(2+) is required as a cofactor.

The sequence is that of 1-aminocyclopropane-1-carboxylate oxidase homolog 11 from Arabidopsis thaliana (Mouse-ear cress).